We begin with the raw amino-acid sequence, 162 residues long: uncharacterized protein (162 aa).

The protein resides in the cytoplasm. The protein localises to the nucleus. This is an uncharacterized protein from Schizosaccharomyces pombe (strain 972 / ATCC 24843) (Fission yeast).